Consider the following 92-residue polypeptide: MPRSLKKGPFIDLHLLKKVEKAVESGDKKPLKTWSRRSMIIPTMIGLTIAVHNGRQHVPVFVTEEMIGHKLGEFAPTRTYRGHAADKKAKKR.

This sequence belongs to the universal ribosomal protein uS19 family.

Its function is as follows. Protein S19 forms a complex with S13 that binds strongly to the 16S ribosomal RNA. This Vibrio vulnificus (strain CMCP6) protein is Small ribosomal subunit protein uS19.